Here is a 23-residue protein sequence, read N- to C-terminus: Acidic phospholipase A2 Ts-A2 (23 aa).

Requires Ca(2+) as cofactor. Contains 7 disulfide bonds. Expressed by the venom gland.

It localises to the secreted. It carries out the reaction a 1,2-diacyl-sn-glycero-3-phosphocholine + H2O = a 1-acyl-sn-glycero-3-phosphocholine + a fatty acid + H(+). Functionally, exhibits moderate hydrolytic activities and prefers the anionic micelles (dPPC with deoxycholate) to the zwitterionic micelles (dPPC with Triton X-100). PLA2 catalyzes the calcium-dependent hydrolysis of the 2-acyl groups in 3-sn-phosphoglycerides. This Trimeresurus stejnegeri (Chinese green tree viper) protein is Acidic phospholipase A2 Ts-A2.